We begin with the raw amino-acid sequence, 339 residues long: Scoulerine-9-O-methyltransferase 3 (339 aa).

Methionine 161 is a binding site for S-adenosyl-L-methionine. Aspartate 164 serves as a coordination point for substrate. Residues threonine 165, glycine 191, aspartate 214, 228–229, and lysine 242 contribute to the S-adenosyl-L-methionine site; that span reads DV. 243–247 serves as a coordination point for substrate; it reads SILHE. The active-site Proton acceptor is the histidine 246.

The protein belongs to the class I-like SAM-binding methyltransferase superfamily. Cation-independent O-methyltransferase family. COMT subfamily. As to quaternary structure, homodimer. Forms heterodimer with SOMT2. The heterodimer SOMT2-SOMT3 possesses 3-O-acetyl-4'-O-demethylpapaveroxine 4'-O-methyltransferase activity, where SOMT2 is the catalytic subunit. Highly expressed in capsules. Expressed is stems. Expressed at low levels in roots.

The catalysed reaction is (S)-scoulerine + S-adenosyl-L-methionine = (S)-tetrahydrocolumbamine + S-adenosyl-L-homocysteine + H(+). Its pathway is alkaloid biosynthesis. Methyltransferase involved in the biosynthesis of the benzylisoquinoline alkaloid noscapine. Catalyzes the conversion of (S)-scoulerine to (S)-tetrahydrocolumbamine. This chain is Scoulerine-9-O-methyltransferase 3, found in Papaver somniferum (Opium poppy).